A 308-amino-acid polypeptide reads, in one-letter code: Coenzyme PQQ synthesis protein B (308 aa).

It belongs to the PqqB family.

It participates in cofactor biosynthesis; pyrroloquinoline quinone biosynthesis. In terms of biological role, may be involved in the transport of PQQ or its precursor to the periplasm. This is Coenzyme PQQ synthesis protein B from Rhodopseudomonas palustris (strain BisB5).